A 120-amino-acid polypeptide reads, in one-letter code: uncharacterized protein (120 aa).

The chain crosses the membrane as a helical span at residues 47–63 (VSIVIGLCTVLISAGAG).

It localises to the membrane. This is an uncharacterized protein from Sinorhizobium fredii (strain NBRC 101917 / NGR234).